Reading from the N-terminus, the 181-residue chain is Large ribosomal subunit protein uL5 (181 aa).

The protein belongs to the universal ribosomal protein uL5 family. As to quaternary structure, part of the 50S ribosomal subunit; part of the 5S rRNA/L5/L18/L25 subcomplex. Contacts the 5S rRNA and the P site tRNA. Forms a bridge to the 30S subunit in the 70S ribosome.

In terms of biological role, this is one of the proteins that bind and probably mediate the attachment of the 5S RNA into the large ribosomal subunit, where it forms part of the central protuberance. In the 70S ribosome it contacts protein S13 of the 30S subunit (bridge B1b), connecting the 2 subunits; this bridge is implicated in subunit movement. Contacts the P site tRNA; the 5S rRNA and some of its associated proteins might help stabilize positioning of ribosome-bound tRNAs. This chain is Large ribosomal subunit protein uL5, found in Campylobacter jejuni subsp. doylei (strain ATCC BAA-1458 / RM4099 / 269.97).